The primary structure comprises 342 residues: Heat-inducible transcription repressor HrcA (342 aa).

The protein belongs to the HrcA family.

Its function is as follows. Negative regulator of class I heat shock genes (grpE-dnaK-dnaJ and groELS operons). Prevents heat-shock induction of these operons. This Oceanobacillus iheyensis (strain DSM 14371 / CIP 107618 / JCM 11309 / KCTC 3954 / HTE831) protein is Heat-inducible transcription repressor HrcA.